The primary structure comprises 211 residues: Pyridoxine/pyridoxamine 5'-phosphate oxidase (211 aa).

Substrate is bound by residues 7 to 10 (RREY) and Lys65. Residues 60–65 (RIVLLK), 75–76 (YT), Arg81, Lys82, and Gln104 each bind FMN. Residues Tyr122, Arg126, and Ser130 each coordinate substrate. Residues 139–140 (QS) and Trp184 each bind FMN. Residue 190–192 (RLH) participates in substrate binding. Arg194 lines the FMN pocket.

The protein belongs to the pyridoxamine 5'-phosphate oxidase family. Homodimer. Requires FMN as cofactor.

The enzyme catalyses pyridoxamine 5'-phosphate + O2 + H2O = pyridoxal 5'-phosphate + H2O2 + NH4(+). It catalyses the reaction pyridoxine 5'-phosphate + O2 = pyridoxal 5'-phosphate + H2O2. It functions in the pathway cofactor metabolism; pyridoxal 5'-phosphate salvage; pyridoxal 5'-phosphate from pyridoxamine 5'-phosphate: step 1/1. Its pathway is cofactor metabolism; pyridoxal 5'-phosphate salvage; pyridoxal 5'-phosphate from pyridoxine 5'-phosphate: step 1/1. Catalyzes the oxidation of either pyridoxine 5'-phosphate (PNP) or pyridoxamine 5'-phosphate (PMP) into pyridoxal 5'-phosphate (PLP). The polypeptide is Pyridoxine/pyridoxamine 5'-phosphate oxidase (Vibrio cholerae serotype O1 (strain ATCC 39315 / El Tor Inaba N16961)).